The sequence spans 250 residues: NH(3)-dependent NAD(+) synthetase (250 aa).

Residue G31 to S38 coordinates ATP. D37 is a binding site for Mg(2+). R122 is a binding site for deamido-NAD(+). An ATP-binding site is contributed by T142. E147 lines the Mg(2+) pocket. Residues K155 and D162 each contribute to the deamido-NAD(+) site. ATP-binding residues include K171 and S193. H239–K240 contacts deamido-NAD(+).

It belongs to the NAD synthetase family. As to quaternary structure, homodimer.

The enzyme catalyses deamido-NAD(+) + NH4(+) + ATP = AMP + diphosphate + NAD(+) + H(+). The protein operates within cofactor biosynthesis; NAD(+) biosynthesis; NAD(+) from deamido-NAD(+) (ammonia route): step 1/1. In terms of biological role, catalyzes the ATP-dependent amidation of deamido-NAD to form NAD. Uses ammonia as a nitrogen source. The protein is NH(3)-dependent NAD(+) synthetase of Alkaliphilus oremlandii (strain OhILAs) (Clostridium oremlandii (strain OhILAs)).